The following is a 144-amino-acid chain: Peroxisome assembly protein 22 (144 aa).

The chain crosses the membrane as a helical span at residues 13 to 35; it reads YGAVSLASLLVAASIVAYRWWNA.

The protein belongs to the peroxin-22 family.

It localises to the peroxisome membrane. Involved in peroxisome biogenesis. This is Peroxisome assembly protein 22 (PEX22) from Eremothecium gossypii (strain ATCC 10895 / CBS 109.51 / FGSC 9923 / NRRL Y-1056) (Yeast).